Reading from the N-terminus, the 384-residue chain is Probable peptidoglycan glycosyltransferase FtsW (384 aa).

Topologically, residues M1–G19 are cytoplasmic. The chain crosses the membrane as a helical span at residues L20 to I40. The Periplasmic segment spans residues K41–R54. The chain crosses the membrane as a helical span at residues H55–E75. Topologically, residues R76–R83 are cytoplasmic. A helical membrane pass occupies residues L84–G104. Residues A105–G110 are Periplasmic-facing. A helical membrane pass occupies residues F111–A131. The Cytoplasmic portion of the chain corresponds to S132 to G143. The helical transmembrane segment at N144 to A164 threads the bilayer. At Q165–P166 the chain is on the periplasmic side. Residues D167 to A187 traverse the membrane as a helical segment. Position 188 (K188) is a topological domain, cytoplasmic. Residues L189–Y209 traverse the membrane as a helical segment. Residues E210 to D267 are Periplasmic-facing. Residues F268–L288 form a helical membrane-spanning segment. The Cytoplasmic portion of the chain corresponds to Q289–C316. A helical transmembrane segment spans residues G317–L337. Residues P338–T343 are Periplasmic-facing. Residues L344 to L364 form a helical membrane-spanning segment. Over L365–A384 the chain is Cytoplasmic.

The protein belongs to the SEDS family. FtsW subfamily.

The protein localises to the cell inner membrane. The enzyme catalyses [GlcNAc-(1-&gt;4)-Mur2Ac(oyl-L-Ala-gamma-D-Glu-L-Lys-D-Ala-D-Ala)](n)-di-trans,octa-cis-undecaprenyl diphosphate + beta-D-GlcNAc-(1-&gt;4)-Mur2Ac(oyl-L-Ala-gamma-D-Glu-L-Lys-D-Ala-D-Ala)-di-trans,octa-cis-undecaprenyl diphosphate = [GlcNAc-(1-&gt;4)-Mur2Ac(oyl-L-Ala-gamma-D-Glu-L-Lys-D-Ala-D-Ala)](n+1)-di-trans,octa-cis-undecaprenyl diphosphate + di-trans,octa-cis-undecaprenyl diphosphate + H(+). The protein operates within cell wall biogenesis; peptidoglycan biosynthesis. Functionally, peptidoglycan polymerase that is essential for cell division. The polypeptide is Probable peptidoglycan glycosyltransferase FtsW (Tolumonas auensis (strain DSM 9187 / NBRC 110442 / TA 4)).